The chain runs to 407 residues: Phosphopentomutase (407 aa).

Mn(2+) contacts are provided by Asp10, Asp306, His311, Asp347, His348, and His359.

It belongs to the phosphopentomutase family. Requires Mn(2+) as cofactor.

It is found in the cytoplasm. It catalyses the reaction 2-deoxy-alpha-D-ribose 1-phosphate = 2-deoxy-D-ribose 5-phosphate. It carries out the reaction alpha-D-ribose 1-phosphate = D-ribose 5-phosphate. The protein operates within carbohydrate degradation; 2-deoxy-D-ribose 1-phosphate degradation; D-glyceraldehyde 3-phosphate and acetaldehyde from 2-deoxy-alpha-D-ribose 1-phosphate: step 1/2. Isomerase that catalyzes the conversion of deoxy-ribose 1-phosphate (dRib-1-P) and ribose 1-phosphate (Rib-1-P) to deoxy-ribose 5-phosphate (dRib-5-P) and ribose 5-phosphate (Rib-5-P), respectively. The sequence is that of Phosphopentomutase from Escherichia coli O127:H6 (strain E2348/69 / EPEC).